Reading from the N-terminus, the 221-residue chain is Protein-L-isoaspartate O-methyltransferase (221 aa).

S57 is an active-site residue.

The protein belongs to the methyltransferase superfamily. L-isoaspartyl/D-aspartyl protein methyltransferase family.

The protein resides in the cytoplasm. It carries out the reaction [protein]-L-isoaspartate + S-adenosyl-L-methionine = [protein]-L-isoaspartate alpha-methyl ester + S-adenosyl-L-homocysteine. In terms of biological role, catalyzes the methyl esterification of L-isoaspartyl residues in peptides and proteins that result from spontaneous decomposition of normal L-aspartyl and L-asparaginyl residues. It plays a role in the repair and/or degradation of damaged proteins. The polypeptide is Protein-L-isoaspartate O-methyltransferase (Korarchaeum cryptofilum (strain OPF8)).